We begin with the raw amino-acid sequence, 676 residues long: MEQQPLTLTAATTRAQELRKQLNQYSHEYYVKDQPSVEDYVYDRLYKELVDIETEFPDLITPDSPTQRVGGKVLSGFEKAPHDIPMYSLNDGFSKEDIFAFDERVRKAIGKPVAYCCELKIDGLAISLRYENGVFVRGATRGDGTVGENITENLRTVRSVPMRLTEPISVEVRGECYMPKQSFVALNEEREENGQDIFANPRNAAAGSLRQLDTKIVAKRNLNTFLYTVADFGPMKAKTQFEALEELSAIGFRTNPERQLCQSIDEVWAYIEEYHEKRSTLPYEIDGIVIKVNEFALQDELGFTVKAPRWAIAYKFPPEEAETVVEDIEWTIGRTGVVTPTAVMAPVRVAGTTVSRASLHNADFIQMKDIRLNDHVIIYKAGDIIPEVAQVLVEKRAADSQPYEMPTHCPICHSELVHLDEEVALRCINPKCPAQIKEGLNHFVSRNAMNIDGLGPRVLAQMYDKGLVKDVADLYFLTEEQLMTLDKIKEKSANNIYTAIQGSKENSVERLIFGLGIRHVGAKAAKILAEHFGDLPTLSRATAEEIVALDSIGETIADSVVTYFENEEVHELMAELEKAQVNLTYKGLRTEQLAEVESPFKDKTVVLTGKLAQYTREEAKEKIENLGGKVTGSVSKKTDIVVAGEDAGSKLTKAESLGVTVWNEQEMVDALDASHF.

NAD(+) contacts are provided by residues 39 to 43 (DYVYD), 88 to 91 (SLND), and glutamate 118. The active-site N6-AMP-lysine intermediate is lysine 120. The NAD(+) site is built by arginine 141, glutamate 175, lysine 291, and lysine 315. Zn(2+) is bound by residues cysteine 409, cysteine 412, cysteine 427, and cysteine 432. A BRCT domain is found at 595–676 (EVESPFKDKT…MVDALDASHF (82 aa)).

Belongs to the NAD-dependent DNA ligase family. LigA subfamily. The cofactor is Mg(2+). It depends on Mn(2+) as a cofactor.

It catalyses the reaction NAD(+) + (deoxyribonucleotide)n-3'-hydroxyl + 5'-phospho-(deoxyribonucleotide)m = (deoxyribonucleotide)n+m + AMP + beta-nicotinamide D-nucleotide.. In terms of biological role, DNA ligase that catalyzes the formation of phosphodiester linkages between 5'-phosphoryl and 3'-hydroxyl groups in double-stranded DNA using NAD as a coenzyme and as the energy source for the reaction. It is essential for DNA replication and repair of damaged DNA. The polypeptide is DNA ligase (Enterococcus faecalis (strain ATCC 700802 / V583)).